A 780-amino-acid polypeptide reads, in one-letter code: Cullin-5 (780 aa).

At Ser34 the chain carries Phosphoserine. At Thr210 the chain carries Phosphothreonine. The Cullin neddylation domain occupies 711–772 (RILRTQEAII…HRYIRRDEAD (62 aa)). A Glycyl lysine isopeptide (Lys-Gly) (interchain with G-Cter in NEDD8) cross-link involves residue Lys724.

This sequence belongs to the cullin family. As to quaternary structure, component of multiple cullin-5-RING E3 ubiquitin-protein ligase complexes (ECS complexes, also named CRL5 complexes) formed of CUL5, Elongin BC (ELOB and ELOC), RNF7/RBX2 and a variable SOCS box domain-containing protein as substrate-specific recognition component. CUL5-containing ECS complexes specifically contain RNF7/RBX2, and not RBX1, as catalytic subunit. Component of the ECS(ASB2) complex with the substrate recognition component ASB2. Component of the ECS(ASB6) complex with the substrate recognition component ASB6. Component of the ECS(ASB7) complex with the substrate recognition component ASB7. Component of the ECS(ASB9) complex with the substrate recognition component ASB9. Component of the ECS(ASB11) complex with the substrate recognition component ASB11. Component of the ECS(ASB12) complex with the substrate recognition component ASB12. Component of the ECS(LRRC41) complex with the substrate recognition component LRRC41. Component of the ECS(SOCS1) complex with the substrate recognition component SOCS1. Component of the ECS(SOCS2) complex with the substrate recognition component SOCS2. Component of the ECS(WSB1) complex with the substrate recognition subunit WSB1. Component of the ECS(SOCS3) complex with the substrate recognition component SOCS3. Component of the ECS(SOCS7) complex with the substrate recognition component SOCS7. Component of the ECS(SPSB1) complex with the substrate recognition component SPSB1. Component of the ECS(SPSB3) complex with the substrate recognition component SPSB3. Component of the ECS(SPSB2) complex with the substrate recognition component SPSB2. Component of the ECS(SPSB4) complex with the substrate recognition component SPSB4. Component of the ECS(RAB40) complex with the substrate recognition subunit RAB40A, RAB40B or RAB40C. Component of the ECS(KLHDC1) complex with the substrate recognition component KLHDC1. Component of the ECS(PCMTD1) complex with the substrate recognition subunit PCMTD1. May also form complexes containing RBX1 and ELOA or VHL; additional evidence is however required to confirm this result in vivo. Interacts (when neddylated) with ARIH2; leading to activate the E3 ligase activity of ARIH2. Interacts with ERCC6; the interaction is induced by DNA damaging agents or inhibitors of RNA polymerase II elongation. Interacts with ELOA (via the BC-box). Interacts (unneddylated form) with DCUN1D1, DCUN1D2, DCUN1D3, DCUN1D4 and DCUN1D5; these interactions promote the cullin neddylation. Neddylated; which enhances the ubiquitination activity of ECS complexes and prevents binding of the inhibitor CAND1. Deneddylated via its interaction with the COP9 signalosome (CSN).

The protein resides in the nucleus. It functions in the pathway protein modification; protein ubiquitination. Core component of multiple cullin-5-RING E3 ubiquitin-protein ligase complexes (ECS complexes, also named CRL5 complexes), which mediate the ubiquitination and subsequent proteasomal degradation of target proteins. Acts a scaffold protein that contributes to catalysis through positioning of the substrate and the ubiquitin-conjugating enzyme. The functional specificity of the E3 ubiquitin-protein ligase complex depends on the variable SOCS box-containing substrate recognition component. Acts as a key regulator of neuron positioning during cortex development: component of various SOCS-containing ECS complexes, such as the ECS(SOCS7) complex, that regulate reelin signaling by mediating ubiquitination and degradation of DAB1. ECS(SOCS1) seems to direct ubiquitination of JAK2. The ECS(SOCS2) complex mediates the ubiquitination and subsequent proteasomal degradation of phosphorylated EPOR and GHR. The ECS(SPSB3) complex catalyzes ubiquitination of nuclear CGAS. ECS(KLHDC1) complex is part of the DesCEND (destruction via C-end degrons) pathway and mediates ubiquitination and degradation of truncated SELENOS selenoprotein produced by failed UGA/Sec decoding, which ends with a glycine. The ECS(ASB9) complex mediates ubiquitination and degradation of CKB. As part of some ECS complex, promotes 'Lys-11'-linked ubiquitination and degradation of BTRC. As part of a multisubunit ECS complex, polyubiquitinates monoubiquitinated POLR2A. As part of the ECS(RAB40C) complex, mediates ANKRD28 ubiquitination and degradation, thereby regulating protein phosphatase 6 (PP6) complex activity and focal adhesion assembly during cell migration. As part of the ECS(RAB40A) complex, mediates RHOU 'Lys-48'-linked ubiquitination and degradation, thus inhibiting focal adhesion disassembly during cell migration. As part of the ECS(RAB40B) complex, mediates LIMA1/EPLIN and RAP2 ubiquitination, thereby regulating actin cytoskeleton dynamics and stress fiber formation during cell migration. May form a cell surface vasopressin receptor. In Mus musculus (Mouse), this protein is Cullin-5.